Reading from the N-terminus, the 264-residue chain is Secretory carrier-associated membrane protein 4 (264 aa).

The disordered stretch occupies residues 1–33 (MNRHHDPNPFDEDEEIVNPFSKGGGRVPAASRP). The Cytoplasmic segment spans residues 1–122 (MNRHHDPNPF…AQKLQYLAFA (122 aa)). Residues 51–85 (MNDSSQKQRKLADWEAELRKKEMDIKRREEAIAKF) adopt a coiled-coil conformation. A run of 4 helical transmembrane segments spans residues 123 to 143 (SWLG…VCWI), 150 to 170 (IFFL…VLWY), 185 to 205 (FGWF…AAIA), and 233 to 253 (IFYF…LWVL). Residues 254–264 (QKIYLYFRGNK) lie on the Cytoplasmic side of the membrane.

The protein belongs to the SCAMP family.

Its subcellular location is the cell membrane. It is found in the cytoplasmic vesicle. The protein localises to the secretory vesicle membrane. Functionally, probably involved in membrane trafficking. The sequence is that of Secretory carrier-associated membrane protein 4 (SCAMP4) from Arabidopsis thaliana (Mouse-ear cress).